The following is a 574-amino-acid chain: Sorting nexin-33 (574 aa).

The 61-residue stretch at 1 to 61 (MALKGRALYD…PASYVEIVRP (61 aa)) folds into the SH3 domain. The residue at position 77 (Ser-77) is a Phosphoserine. The segment covering 79–90 (GTQGSLYSSPSM) has biased composition (polar residues). A disordered region spans residues 79–116 (GTQGSLYSSPSMASPARSGGGSGFLSNPGSFEDDDDDD). The residue at position 92 (Ser-92) is a Phosphoserine. The PX domain occupies 230-340 (FACSIEDPTK…HFLSCLDDKQ (111 aa)). Residues 371 to 574 (LQDVEDRVDT…EKTLHMYDHL (204 aa)) enclose the BAR domain.

This sequence belongs to the sorting nexin family. In terms of assembly, homodimer (via BAR domain). Interacts with ADAM15. Interacts with FASLG. Interacts (via SH3 domain) with DNM1 and DNM2. Interacts with WASL. Interacts with FCHSD1 (via the F-BAR domain). In terms of processing, phosphorylated. As to expression, detected in brain (at protein level).

Its subcellular location is the cytoplasm. The protein localises to the cytosol. It is found in the membrane. The protein resides in the cytoplasmic vesicle membrane. In terms of biological role, plays a role in the reorganization of the cytoskeleton, endocytosis and cellular vesicle trafficking via its interactions with membranes, WASL, DNM1 and DNM2. Acts both during interphase and at the end of mitotic cell divisions. Required for efficient progress through mitosis and cytokinesis. Required for normal formation of the cleavage furrow at the end of mitosis. Modulates endocytosis of cell-surface proteins, such as APP and PRNP; this then modulates the secretion of APP and PRNP peptides. Promotes membrane tubulation (in vitro). May promote the formation of macropinosomes. This Mus musculus (Mouse) protein is Sorting nexin-33 (Snx33).